Here is a 397-residue protein sequence, read N- to C-terminus: Heterogeneous nuclear ribonucleoprotein K homolog (397 aa).

The tract at residues 1–41 (MMIKVGAAINGTDSPKAMKREHDNDDGDRTGRHKRPKTDGF) is disordered. A compositionally biased stretch (basic and acidic residues) spans 16-30 (KAMKREHDNDDGDRT). KH domains follow at residues 49–111 (KFEV…LKDV) and 124–189 (PCEV…IEEV). The disordered stretch occupies residues 220–279 (GGFPGNMPAGGPPNNRGPAPQRGGQGPPGGPRSYGGAITQGGGQRSFEAGDFQQFRGGPG). Low complexity predominate over residues 224–241 (GNMPAGGPPNNRGPAPQR). Residues 316–379 (VTTAQVTIPS…QQIHSAQYLL (64 aa)) enclose the KH 3 domain.

In terms of assembly, interacts with alg-1; the interaction is direct and may be strengthened through RNA-protein association. As to expression, expressed in gut, muscle, neuronal and hypodermal tissues. Highly expressed in the germline and oocytes.

Its subcellular location is the nucleus. The protein resides in the cytoplasm. Functionally, RNA-binding protein which functions together with alg-1, a component of the miRNA loading complex, to modulate the processing and activity of specific miRNAs such as miR-58 and let-7 to regulate gene expression at the post-transcriptional level during embryonic, hypodermal and neuronal development. Promotes the lsy-6-mediated repression of cog-1 in uterine cells. In embryos, may play a role in the DNA damage response. The polypeptide is Heterogeneous nuclear ribonucleoprotein K homolog (Caenorhabditis elegans).